The primary structure comprises 331 residues: Glutaminase-asparaginase (331 aa).

In terms of domain architecture, Asparaginase/glutaminase spans 2–331 (NNVVIVATGG…KEIQNMFWNY (330 aa)). The active-site Acyl-ester intermediate is the threonine 12. Residues serine 59 and 92-93 (TD) contribute to the substrate site.

It belongs to the asparaginase 1 family. As to quaternary structure, homotetramer.

It is found in the periplasm. The enzyme catalyses L-glutamine + H2O = L-glutamate + NH4(+). It catalyses the reaction L-asparagine + H2O = L-aspartate + NH4(+). In Acinetobacter glutaminasificans, this protein is Glutaminase-asparaginase (ansB).